Reading from the N-terminus, the 374-residue chain is Spore germination protein B3 (374 aa).

The signal sequence occupies residues 1-19 (MKTASKFSVMFFMLLALCG). Cys20 is lipidated: N-palmitoyl cysteine. Cys20 carries S-diacylglycerol cysteine lipidation.

Belongs to the GerABKC lipoprotein family.

It is found in the cell membrane. Functionally, involved in the response to the germinative mixture of L-asparagine, glucose, fructose and potassium ions (AGFK). Cannot stimulate germination in the absence of gerD and gerK gene products (fructose and glucose receptors respectively). In Bacillus subtilis (strain 168), this protein is Spore germination protein B3 (gerBC).